A 78-amino-acid chain; its full sequence is UPF0349 protein SSP1836 (78 aa).

Belongs to the UPF0349 family.

This is UPF0349 protein SSP1836 from Staphylococcus saprophyticus subsp. saprophyticus (strain ATCC 15305 / DSM 20229 / NCIMB 8711 / NCTC 7292 / S-41).